Reading from the N-terminus, the 363-residue chain is Dihydroorotate dehydrogenase (quinone) (363 aa).

FMN is bound by residues 62 to 66 (AGYDK) and Thr86. Position 66 (Lys66) interacts with substrate. Residue 111-115 (NRLGF) participates in substrate binding. Positions 139 and 170 each coordinate FMN. Residue Asn170 participates in substrate binding. Ser173 acts as the Nucleophile in catalysis. Asn175 is a binding site for substrate. Residues Lys215 and Ser243 each coordinate FMN. 244-245 (NT) provides a ligand contact to substrate. Residues Gly266, Gly295, and 316–317 (YS) contribute to the FMN site.

The protein belongs to the dihydroorotate dehydrogenase family. Type 2 subfamily. As to quaternary structure, monomer. FMN is required as a cofactor.

Its subcellular location is the cell membrane. The enzyme catalyses (S)-dihydroorotate + a quinone = orotate + a quinol. It functions in the pathway pyrimidine metabolism; UMP biosynthesis via de novo pathway; orotate from (S)-dihydroorotate (quinone route): step 1/1. Its function is as follows. Catalyzes the conversion of dihydroorotate to orotate with quinone as electron acceptor. The chain is Dihydroorotate dehydrogenase (quinone) from Agrobacterium fabrum (strain C58 / ATCC 33970) (Agrobacterium tumefaciens (strain C58)).